Consider the following 188-residue polypeptide: Elongation factor P (188 aa).

The protein belongs to the elongation factor P family.

Its subcellular location is the cytoplasm. It participates in protein biosynthesis; polypeptide chain elongation. Functionally, involved in peptide bond synthesis. Stimulates efficient translation and peptide-bond synthesis on native or reconstituted 70S ribosomes in vitro. Probably functions indirectly by altering the affinity of the ribosome for aminoacyl-tRNA, thus increasing their reactivity as acceptors for peptidyl transferase. The sequence is that of Elongation factor P from Streptomyces avermitilis (strain ATCC 31267 / DSM 46492 / JCM 5070 / NBRC 14893 / NCIMB 12804 / NRRL 8165 / MA-4680).